The primary structure comprises 208 residues: Uridine kinase (208 aa).

ATP is bound at residue 12 to 19; that stretch reads GGSGGGKT.

Belongs to the uridine kinase family.

The protein localises to the cytoplasm. It carries out the reaction uridine + ATP = UMP + ADP + H(+). It catalyses the reaction cytidine + ATP = CMP + ADP + H(+). It participates in pyrimidine metabolism; CTP biosynthesis via salvage pathway; CTP from cytidine: step 1/3. Its pathway is pyrimidine metabolism; UMP biosynthesis via salvage pathway; UMP from uridine: step 1/1. The protein is Uridine kinase of Streptococcus equi subsp. equi (strain 4047).